Reading from the N-terminus, the 283-residue chain is Bifunctional protein FolD (283 aa).

NADP(+)-binding positions include 165–167 (GRS), Ser-190, and Ile-231.

This sequence belongs to the tetrahydrofolate dehydrogenase/cyclohydrolase family. In terms of assembly, homodimer.

It carries out the reaction (6R)-5,10-methylene-5,6,7,8-tetrahydrofolate + NADP(+) = (6R)-5,10-methenyltetrahydrofolate + NADPH. It catalyses the reaction (6R)-5,10-methenyltetrahydrofolate + H2O = (6R)-10-formyltetrahydrofolate + H(+). It participates in one-carbon metabolism; tetrahydrofolate interconversion. Functionally, catalyzes the oxidation of 5,10-methylenetetrahydrofolate to 5,10-methenyltetrahydrofolate and then the hydrolysis of 5,10-methenyltetrahydrofolate to 10-formyltetrahydrofolate. The chain is Bifunctional protein FolD from Herminiimonas arsenicoxydans.